The following is a 309-amino-acid chain: Aspartate carbamoyltransferase catalytic subunit (309 aa).

Positions 55 and 56 each coordinate carbamoyl phosphate. Lys85 provides a ligand contact to L-aspartate. Arg106, His135, and Gln138 together coordinate carbamoyl phosphate. Positions 168 and 230 each coordinate L-aspartate. Leu268 and Pro269 together coordinate carbamoyl phosphate.

Belongs to the aspartate/ornithine carbamoyltransferase superfamily. ATCase family. In terms of assembly, heterododecamer (2C3:3R2) of six catalytic PyrB chains organized as two trimers (C3), and six regulatory PyrI chains organized as three dimers (R2).

The enzyme catalyses carbamoyl phosphate + L-aspartate = N-carbamoyl-L-aspartate + phosphate + H(+). It functions in the pathway pyrimidine metabolism; UMP biosynthesis via de novo pathway; (S)-dihydroorotate from bicarbonate: step 2/3. In terms of biological role, catalyzes the condensation of carbamoyl phosphate and aspartate to form carbamoyl aspartate and inorganic phosphate, the committed step in the de novo pyrimidine nucleotide biosynthesis pathway. This chain is Aspartate carbamoyltransferase catalytic subunit, found in Vibrio cholerae serotype O1 (strain ATCC 39315 / El Tor Inaba N16961).